The primary structure comprises 271 residues: Putative mitochondrial carrier protein PET8 (271 aa).

3 Solcar repeats span residues 3 to 76 (STFL…MKQQ), 91 to 177 (AEVL…LKKK), and 187 to 270 (VSAW…VHSL). 6 helical membrane passes run 6–26 (LASL…FFPI), 51–71 (GLGS…VTYD), 97–117 (MLSS…AEVI), 152–168 (GWWT…CIQF), 193–213 (AVCG…LDVL), and 251–271 (MWIS…HSLF).

The protein belongs to the mitochondrial carrier (TC 2.A.29) family.

The protein resides in the mitochondrion inner membrane. The protein is Putative mitochondrial carrier protein PET8 (PET8) of Eremothecium gossypii (strain ATCC 10895 / CBS 109.51 / FGSC 9923 / NRRL Y-1056) (Yeast).